Reading from the N-terminus, the 405-residue chain is Replication factor C large subunit (405 aa).

Residue Gly-47–Thr-54 participates in ATP binding.

It belongs to the activator 1 small subunits family. RfcL subfamily. As to quaternary structure, heteromultimer composed of small subunits (RfcS) and large subunits (RfcL).

Functionally, part of the RFC clamp loader complex which loads the PCNA sliding clamp onto DNA. This chain is Replication factor C large subunit, found in Saccharolobus islandicus (strain Y.N.15.51 / Yellowstone #2) (Sulfolobus islandicus).